Consider the following 584-residue polypeptide: Arginine--tRNA ligase (584 aa).

The short motif at 126–136 (PNIAKEMHVGH) is the 'HIGH' region element.

This sequence belongs to the class-I aminoacyl-tRNA synthetase family. Monomer.

The protein localises to the cytoplasm. It carries out the reaction tRNA(Arg) + L-arginine + ATP = L-arginyl-tRNA(Arg) + AMP + diphosphate. The protein is Arginine--tRNA ligase of Nostoc punctiforme (strain ATCC 29133 / PCC 73102).